The following is a 226-amino-acid chain: ATP synthase subunit a (226 aa).

The next 6 membrane-spanning stretches (helical) occupy residues 18-38, 76-96, 105-125, 134-154, 179-199, and 201-221; these read FITG…SLGA, YFPL…IGII, SWSF…FEGI, FAHF…IEII, LIML…VLFF, and GILQ…GAVL.

This sequence belongs to the ATPase A chain family. As to quaternary structure, F-type ATPases have 2 components, CF(1) - the catalytic core - and CF(0) - the membrane proton channel. CF(1) has five subunits: alpha(3), beta(3), gamma(1), delta(1), epsilon(1). CF(0) has three main subunits: a(1), b(2) and c(9-12). The alpha and beta chains form an alternating ring which encloses part of the gamma chain. CF(1) is attached to CF(0) by a central stalk formed by the gamma and epsilon chains, while a peripheral stalk is formed by the delta and b chains.

The protein resides in the cell inner membrane. Key component of the proton channel; it plays a direct role in the translocation of protons across the membrane. The protein is ATP synthase subunit a of Helicobacter acinonychis (strain Sheeba).